The chain runs to 406 residues: Formate-dependent phosphoribosylglycinamide formyltransferase (406 aa).

Residues 28 to 29 (EL) and Glu-88 each bind N(1)-(5-phospho-beta-D-ribosyl)glycinamide. Residues Arg-121, Lys-162, 167–172 (SSGKGQ), 202–205 (EGFI), and Glu-210 contribute to the ATP site. An ATP-grasp domain is found at 126–320 (RLAAEELGCA…EFELHAKAIL (195 aa)). Mg(2+) is bound by residues Glu-279 and Glu-291. N(1)-(5-phospho-beta-D-ribosyl)glycinamide contacts are provided by residues Asp-298, Lys-367, and 374-375 (RR).

Belongs to the PurK/PurT family. In terms of assembly, homodimer.

It carries out the reaction N(1)-(5-phospho-beta-D-ribosyl)glycinamide + formate + ATP = N(2)-formyl-N(1)-(5-phospho-beta-D-ribosyl)glycinamide + ADP + phosphate + H(+). It functions in the pathway purine metabolism; IMP biosynthesis via de novo pathway; N(2)-formyl-N(1)-(5-phospho-D-ribosyl)glycinamide from N(1)-(5-phospho-D-ribosyl)glycinamide (formate route): step 1/1. Involved in the de novo purine biosynthesis. Catalyzes the transfer of formate to 5-phospho-ribosyl-glycinamide (GAR), producing 5-phospho-ribosyl-N-formylglycinamide (FGAR). Formate is provided by PurU via hydrolysis of 10-formyl-tetrahydrofolate. The sequence is that of Formate-dependent phosphoribosylglycinamide formyltransferase from Janthinobacterium sp. (strain Marseille) (Minibacterium massiliensis).